A 599-amino-acid chain; its full sequence is Elongation factor 4 (599 aa).

The 183-residue stretch at 5–187 (SHIRNFSIIA…HLVRVIPPPQ (183 aa)) folds into the tr-type G domain. GTP contacts are provided by residues 17-22 (DHGKST) and 134-137 (NKMD).

It belongs to the TRAFAC class translation factor GTPase superfamily. Classic translation factor GTPase family. LepA subfamily.

The protein resides in the cell inner membrane. The catalysed reaction is GTP + H2O = GDP + phosphate + H(+). Required for accurate and efficient protein synthesis under certain stress conditions. May act as a fidelity factor of the translation reaction, by catalyzing a one-codon backward translocation of tRNAs on improperly translocated ribosomes. Back-translocation proceeds from a post-translocation (POST) complex to a pre-translocation (PRE) complex, thus giving elongation factor G a second chance to translocate the tRNAs correctly. Binds to ribosomes in a GTP-dependent manner. This Azotobacter vinelandii (strain DJ / ATCC BAA-1303) protein is Elongation factor 4.